The primary structure comprises 280 residues: Phosphatidylserine decarboxylase proenzyme (280 aa).

Active-site charge relay system; for autoendoproteolytic cleavage activity residues include Asp-86, His-143, and Ser-246. Ser-246 (schiff-base intermediate with substrate; via pyruvic acid; for decarboxylase activity) is an active-site residue. Ser-246 is modified (pyruvic acid (Ser); by autocatalysis).

This sequence belongs to the phosphatidylserine decarboxylase family. PSD-B subfamily. Prokaryotic type I sub-subfamily. Heterodimer of a large membrane-associated beta subunit and a small pyruvoyl-containing alpha subunit. Requires pyruvate as cofactor. In terms of processing, is synthesized initially as an inactive proenzyme. Formation of the active enzyme involves a self-maturation process in which the active site pyruvoyl group is generated from an internal serine residue via an autocatalytic post-translational modification. Two non-identical subunits are generated from the proenzyme in this reaction, and the pyruvate is formed at the N-terminus of the alpha chain, which is derived from the carboxyl end of the proenzyme. The autoendoproteolytic cleavage occurs by a canonical serine protease mechanism, in which the side chain hydroxyl group of the serine supplies its oxygen atom to form the C-terminus of the beta chain, while the remainder of the serine residue undergoes an oxidative deamination to produce ammonia and the pyruvoyl prosthetic group on the alpha chain. During this reaction, the Ser that is part of the protease active site of the proenzyme becomes the pyruvoyl prosthetic group, which constitutes an essential element of the active site of the mature decarboxylase.

Its subcellular location is the cell membrane. It catalyses the reaction a 1,2-diacyl-sn-glycero-3-phospho-L-serine + H(+) = a 1,2-diacyl-sn-glycero-3-phosphoethanolamine + CO2. It participates in phospholipid metabolism; phosphatidylethanolamine biosynthesis; phosphatidylethanolamine from CDP-diacylglycerol: step 2/2. Functionally, catalyzes the formation of phosphatidylethanolamine (PtdEtn) from phosphatidylserine (PtdSer). The protein is Phosphatidylserine decarboxylase proenzyme of Brevibacillus brevis (strain 47 / JCM 6285 / NBRC 100599).